A 273-amino-acid chain; its full sequence is Shikimate dehydrogenase (NADP(+)) (273 aa).

Residues 19–21 (SKS) and threonine 66 contribute to the shikimate site. Residue lysine 70 is the Proton acceptor of the active site. The shikimate site is built by asparagine 91 and aspartate 107. Residues 131–135 (GAGGA) and methionine 218 each bind NADP(+). Tyrosine 220 is a shikimate binding site. Residue glycine 242 coordinates NADP(+).

It belongs to the shikimate dehydrogenase family. Homodimer.

It catalyses the reaction shikimate + NADP(+) = 3-dehydroshikimate + NADPH + H(+). The protein operates within metabolic intermediate biosynthesis; chorismate biosynthesis; chorismate from D-erythrose 4-phosphate and phosphoenolpyruvate: step 4/7. In terms of biological role, involved in the biosynthesis of the chorismate, which leads to the biosynthesis of aromatic amino acids. Catalyzes the reversible NADPH linked reduction of 3-dehydroshikimate (DHSA) to yield shikimate (SA). In Buchnera aphidicola subsp. Acyrthosiphon pisum (strain 5A), this protein is Shikimate dehydrogenase (NADP(+)).